We begin with the raw amino-acid sequence, 89 residues long: Sec translocon accessory complex subunit YrbF (89 aa).

A helical membrane pass occupies residues 4–24 (GTLGTLVPIILMFAVLYFLLI).

The protein belongs to the YajC family. In terms of assembly, part of the SecDF-YidC-YajC translocase complex. The SecDF-YidC-YajC translocase forms a supercomplex with SecYEG, called the holo-translocon (HTL).

It localises to the cell membrane. The SecYEG-SecDF-YajC-YidC holo-translocon (HTL) protein secretase/insertase is a supercomplex required for protein secretion, insertion of proteins into membranes, and assembly of membrane protein complexes. While the SecYEG complex is essential for assembly of a number of proteins and complexes, the SecDF-YajC-YidC subcomplex facilitates these functions. The chain is Sec translocon accessory complex subunit YrbF (yrbF) from Bacillus subtilis (strain 168).